We begin with the raw amino-acid sequence, 311 residues long: tRNA-cytidine(32) 2-sulfurtransferase (311 aa).

The short motif at 47-52 (SGGKDS) is the PP-loop motif element. The [4Fe-4S] cluster site is built by Cys-122, Cys-125, and Cys-213.

The protein belongs to the TtcA family. As to quaternary structure, homodimer. Requires Mg(2+) as cofactor. It depends on [4Fe-4S] cluster as a cofactor.

Its subcellular location is the cytoplasm. The catalysed reaction is cytidine(32) in tRNA + S-sulfanyl-L-cysteinyl-[cysteine desulfurase] + AH2 + ATP = 2-thiocytidine(32) in tRNA + L-cysteinyl-[cysteine desulfurase] + A + AMP + diphosphate + H(+). Its pathway is tRNA modification. Catalyzes the ATP-dependent 2-thiolation of cytidine in position 32 of tRNA, to form 2-thiocytidine (s(2)C32). The sulfur atoms are provided by the cysteine/cysteine desulfurase (IscS) system. This Escherichia coli O7:K1 (strain IAI39 / ExPEC) protein is tRNA-cytidine(32) 2-sulfurtransferase.